Consider the following 741-residue polypeptide: Translation initiation factor IF-2 (741 aa).

Basic and acidic residues-rich tracts occupy residues 48 to 74 and 107 to 123; these read HQYRPKAEKKTETKNEKKAEKKTDKPK and KGKETKRTEAQQQEKKA. The tract at residues 48–158 is disordered; the sequence is HQYRPKAEKK…PQPAKKEKEL (111 aa). Basic residues predominate over residues 127-139; that stretch reads AKKKGKGPAKGKK. A compositionally biased stretch (low complexity) spans 140-151; sequence QAAPAAKQVPQP. Residues 242–411 form the tr-type G domain; it reads ERPPVVTIMG…LLVSEMEELK (170 aa). Residues 251-258 form a G1 region; the sequence is GHVDHGKT. 251–258 contacts GTP; that stretch reads GHVDHGKT. The segment at 276 to 280 is G2; that stretch reads GITQH. The tract at residues 297–300 is G3; the sequence is DTPG. Residues 297-301 and 351-354 contribute to the GTP site; these read DTPGH and NKMD. The tract at residues 351-354 is G4; sequence NKMD. A G5 region spans residues 387–389; that stretch reads SAK.

The protein belongs to the TRAFAC class translation factor GTPase superfamily. Classic translation factor GTPase family. IF-2 subfamily.

The protein resides in the cytoplasm. Its function is as follows. One of the essential components for the initiation of protein synthesis. Protects formylmethionyl-tRNA from spontaneous hydrolysis and promotes its binding to the 30S ribosomal subunits. Also involved in the hydrolysis of GTP during the formation of the 70S ribosomal complex. In Geobacillus stearothermophilus (Bacillus stearothermophilus), this protein is Translation initiation factor IF-2 (infB).